Here is a 122-residue protein sequence, read N- to C-terminus: Large ribosomal subunit protein uL14 (122 aa).

It belongs to the universal ribosomal protein uL14 family. Part of the 50S ribosomal subunit. Forms a cluster with proteins L3 and L19. In the 70S ribosome, L14 and L19 interact and together make contacts with the 16S rRNA in bridges B5 and B8.

In terms of biological role, binds to 23S rRNA. Forms part of two intersubunit bridges in the 70S ribosome. This Rhodospirillum centenum (strain ATCC 51521 / SW) protein is Large ribosomal subunit protein uL14.